A 201-amino-acid chain; its full sequence is FMN-dependent NADH:quinone oxidoreductase (201 aa).

Residues Ser-10, 16 to 18 (SQS), 96 to 99 (MYNF), and 140 to 143 (SRGG) contribute to the FMN site.

The protein belongs to the azoreductase type 1 family. As to quaternary structure, homodimer. It depends on FMN as a cofactor.

The catalysed reaction is 2 a quinone + NADH + H(+) = 2 a 1,4-benzosemiquinone + NAD(+). It carries out the reaction N,N-dimethyl-1,4-phenylenediamine + anthranilate + 2 NAD(+) = 2-(4-dimethylaminophenyl)diazenylbenzoate + 2 NADH + 2 H(+). In terms of biological role, quinone reductase that provides resistance to thiol-specific stress caused by electrophilic quinones. Functionally, also exhibits azoreductase activity. Catalyzes the reductive cleavage of the azo bond in aromatic azo compounds to the corresponding amines. In Salmonella paratyphi A (strain ATCC 9150 / SARB42), this protein is FMN-dependent NADH:quinone oxidoreductase.